Here is a 526-residue protein sequence, read N- to C-terminus: NAD(P)H-quinone oxidoreductase chain 4 2 (526 aa).

14 consecutive transmembrane segments (helical) span residues 6–26 (FPWL…LPLI), 36–56 (WYAL…FYTG), 91–111 (LILL…PVSF), 113–133 (PKLF…VFAV), 137–157 (LLFF…LSIW), 169–189 (FILY…TMAF), 212–232 (LLLY…FPLH), 243–263 (TAPA…YALL), 275–295 (ALFG…AALT), 306–326 (IAYS…SFTD), 332–352 (AMLQ…MVGA), 375–397 (IFAM…GFVA), 417–437 (VIIV…LLSM), and 464–484 (VFVI…PKAV).

The protein belongs to the complex I subunit 4 family.

It is found in the cellular thylakoid membrane. It carries out the reaction a plastoquinone + NADH + (n+1) H(+)(in) = a plastoquinol + NAD(+) + n H(+)(out). The catalysed reaction is a plastoquinone + NADPH + (n+1) H(+)(in) = a plastoquinol + NADP(+) + n H(+)(out). In terms of biological role, NDH-1 shuttles electrons from NAD(P)H, via FMN and iron-sulfur (Fe-S) centers, to quinones in the respiratory chain. The immediate electron acceptor for the enzyme in this species is believed to be plastoquinone. Couples the redox reaction to proton translocation (for every two electrons transferred, four hydrogen ions are translocated across the cytoplasmic membrane), and thus conserves the redox energy in a proton gradient. This chain is NAD(P)H-quinone oxidoreductase chain 4 2, found in Picosynechococcus sp. (strain ATCC 27264 / PCC 7002 / PR-6) (Agmenellum quadruplicatum).